Reading from the N-terminus, the 229-residue chain is Ribulose-phosphate 3-epimerase (229 aa).

Ser12 provides a ligand contact to substrate. 3 residues coordinate a divalent metal cation: His37, Asp39, and His70. Asp39 serves as the catalytic Proton acceptor. Residues His70, 146–149 (GFTG), 181–183 (DGG), and 203–204 (AS) each bind substrate. Asp181 is an a divalent metal cation binding site. Asp181 functions as the Proton donor in the catalytic mechanism.

The protein belongs to the ribulose-phosphate 3-epimerase family. A divalent metal cation is required as a cofactor.

The catalysed reaction is D-ribulose 5-phosphate = D-xylulose 5-phosphate. Its pathway is carbohydrate degradation. Its function is as follows. Catalyzes the reversible epimerization of D-ribulose 5-phosphate to D-xylulose 5-phosphate. The polypeptide is Ribulose-phosphate 3-epimerase (Chlamydia pneumoniae (Chlamydophila pneumoniae)).